The primary structure comprises 162 residues: MTTATQLLKSFTLWEFLKAHALTLKYFFKPKATINYPFEKNPLSPRFRGEHALRRYPNGEERCIACKLCEAVCPAQAITIESEPRDDGSRRTTRYDIDMTKCIYCGFCQEACPVDAIVEGPNFEYSTETREELLYDKAKLLANGDKWERAIAANLEADAPYR.

4Fe-4S ferredoxin-type domains are found at residues 53–83 (LRRY…IESE) and 93–122 (TRYD…EGPN). [4Fe-4S] cluster is bound by residues cysteine 63, cysteine 66, cysteine 69, cysteine 73, cysteine 102, cysteine 105, cysteine 108, and cysteine 112.

This sequence belongs to the complex I 23 kDa subunit family. In terms of assembly, NDH-1 is composed of 14 different subunits. Subunits NuoA, H, J, K, L, M, N constitute the membrane sector of the complex. [4Fe-4S] cluster serves as cofactor.

It localises to the cell inner membrane. The catalysed reaction is a quinone + NADH + 5 H(+)(in) = a quinol + NAD(+) + 4 H(+)(out). In terms of biological role, NDH-1 shuttles electrons from NADH, via FMN and iron-sulfur (Fe-S) centers, to quinones in the respiratory chain. The immediate electron acceptor for the enzyme in this species is believed to be ubiquinone. Couples the redox reaction to proton translocation (for every two electrons transferred, four hydrogen ions are translocated across the cytoplasmic membrane), and thus conserves the redox energy in a proton gradient. The sequence is that of NADH-quinone oxidoreductase subunit I from Erythrobacter litoralis (strain HTCC2594).